The primary structure comprises 251 residues: Derlin-1 (251 aa).

Residue Ser2 is modified to N-acetylserine. The Cytoplasmic portion of the chain corresponds to 2-15; it reads SDIGDWFRSIPAIT. A helical transmembrane segment spans residues 16–31; that stretch reads RYWFAATVAVPLVGKL. Over 32–69 the chain is Lumenal; sequence GLISPAYLFLWPEAFLYRFQIWRPITATFYFPVGPGTG. Residues 70–89 form a helical membrane-spanning segment; it reads FLYLVNLYFLYQYSTRLETG. Over 90-94 the chain is Cytoplasmic; that stretch reads AFDGR. Residues 95 to 115 traverse the membrane as a helical segment; it reads PADYLFMLLFNWICIVITGLA. Topologically, residues 116–122 are lumenal; that stretch reads MDMQLLM. A helical membrane pass occupies residues 123-137; the sequence is IPLIMSVLYVWAQLN. Over 138-154 the chain is Cytoplasmic; the sequence is RDMIVSFWFGTRFKACY. The helical transmembrane segment at 155-166 threads the bilayer; the sequence is LPWVILGFNYII. Residues 167 to 170 are Lumenal-facing; the sequence is GGSV. Residues 171–189 traverse the membrane as a helical segment; the sequence is INELIGNLVGHLYFFLMFR. Residues 190–251 are Cytoplasmic-facing; the sequence is YPMDLGGRNF…WGQGFRLGDQ (62 aa). A Phosphoserine modification is found at Ser201. A Phosphothreonine modification is found at Thr202. Residue Ser226 is modified to Phosphoserine. The disordered stretch occupies residues 229–251; sequence RAADQNGGGGRHNWGQGFRLGDQ. Residues 241–248 carry the SHP-box motif; it reads NWGQGFRL.

Belongs to the derlin family. In terms of assembly, homotetramer. The four subunits of the tetramer are arranged in a twofold symmetry. Forms heterooligomers with DERL2 and DERL3; binding to DERL3 is poorer than that between DERL2 and DERL3. Interacts (via SHP-box motif) with VCP. Interacts with AMFR, SELENOS, SEL1L, SELENOK and SYVN1, as well as with SEL1L-SYVN1 and VCP-SELENOS protein complexes; this interaction is weaker than that observed between DERL2 and these complexes. Interacts with NGLY1 and YOD1. Does not bind to EDEM1. Interacts with DNAJB9. Interacts with RNF103. Interacts with HM13. Interacts with XBP1 isoform 1 (via luminal/ectodomain domain); the interaction obviates the need for ectodomain shedding prior HM13/SPP-mediated XBP1 isoform 1 cleavage. Interacts with the signal recognition particle/SRP and the SRP receptor; in the process of endoplasmic reticulum stress-induced pre-emptive quality control. May interact with UBXN6. Interacts with ZFAND2B; probably through VCP. Interacts with CCDC47. Interacts with C18orf32. May interact with TRAM1. Forms a complex with SVIP and VCP/p97. As to quaternary structure, (Microbial infection) Interacts with the cytomegalovirus US11 protein. In terms of tissue distribution, ubiquitous.

The protein localises to the endoplasmic reticulum membrane. In terms of biological role, functional component of endoplasmic reticulum-associated degradation (ERAD) for misfolded lumenal proteins. Forms homotetramers which encircle a large channel traversing the endoplasmic reticulum (ER) membrane. This allows the retrotranslocation of misfolded proteins from the ER into the cytosol where they are ubiquitinated and degraded by the proteasome. The channel has a lateral gate within the membrane which provides direct access to membrane proteins with no need to reenter the ER lumen first. May mediate the interaction between VCP and the misfolded protein. Also involved in endoplasmic reticulum stress-induced pre-emptive quality control, a mechanism that selectively attenuates the translocation of newly synthesized proteins into the endoplasmic reticulum and reroutes them to the cytosol for proteasomal degradation. By controlling the steady-state expression of the IGF1R receptor, indirectly regulates the insulin-like growth factor receptor signaling pathway. Functionally, (Microbial infection) In case of infection by cytomegaloviruses, it plays a central role in the export from the ER and subsequent degradation of MHC class I heavy chains via its interaction with US11 viral protein, which recognizes and associates with MHC class I heavy chains. Also participates in the degradation process of misfolded cytomegalovirus US2 protein. The protein is Derlin-1 of Homo sapiens (Human).